Consider the following 125-residue polypeptide: Small ribosomal subunit protein eS25 (125 aa).

Over residues Met1–Val23 the composition is skewed to basic and acidic residues. A disordered region spans residues Met1 to Gly38. The span at Gly28–Gly38 shows a compositional bias: basic residues. Lys43 carries the N6-acetyllysine modification. Lys52 carries the N6-acetyllysine; alternate modification. At Lys52 the chain carries N6-succinyllysine; alternate. Lys60 and Lys66 each carry N6-acetyllysine. Lys94 carries the post-translational modification N6-acetyllysine; alternate. The residue at position 94 (Lys94) is an N6-succinyllysine; alternate.

The protein belongs to the eukaryotic ribosomal protein eS25 family. Component of the small ribosomal subunit.

It localises to the cytoplasm. Its function is as follows. Component of the small ribosomal subunit. The ribosome is a large ribonucleoprotein complex responsible for the synthesis of proteins in the cell. The chain is Small ribosomal subunit protein eS25 (RPS25) from Homo sapiens (Human).